The following is a 71-amino-acid chain: Small ribosomal subunit protein bS21 (71 aa).

The protein belongs to the bacterial ribosomal protein bS21 family.

The polypeptide is Small ribosomal subunit protein bS21 (Baumannia cicadellinicola subsp. Homalodisca coagulata).